The following is a 377-amino-acid chain: D-alanine--D-alanine ligase (377 aa).

In terms of domain architecture, ATP-grasp spans 137-346; sequence KELMTVNGIR…RSQQAEKLIQ (210 aa). Residue 167 to 222 coordinates ATP; sequence SKQLGEVVFVKAANQGSSVGVSRVTNAEEYENALRDSFQYDEKLLVEKAVESPTEL. The Mg(2+) site is built by aspartate 300, glutamate 313, and asparagine 315.

It belongs to the D-alanine--D-alanine ligase family. Mg(2+) serves as cofactor. Mn(2+) is required as a cofactor.

It localises to the cytoplasm. It carries out the reaction 2 D-alanine + ATP = D-alanyl-D-alanine + ADP + phosphate + H(+). Its pathway is cell wall biogenesis; peptidoglycan biosynthesis. In terms of biological role, cell wall formation. This is D-alanine--D-alanine ligase from Oenococcus oeni (strain ATCC BAA-331 / PSU-1).